The sequence spans 90 residues: Mitochondrial import inner membrane translocase subunit Tim10 (90 aa).

The Twin CX3C motif signature appears at 29-54 (CHRKCVPPHYKEAELSKGESVCLDRC). Disulfide bonds link C29-C54 and C33-C50.

This sequence belongs to the small Tim family. As to quaternary structure, heterohexamer; composed of 3 copies of TIMM9 and 3 copies of TIMM10/TIM10A, named soluble 70 kDa complex. The complex forms a 6-bladed alpha-propeller structure and associates with the TIMM22 component of the TIM22 complex. Interacts with multi-pass transmembrane proteins in transit. Also forms a complex composed of TIMM9, TIMM10/TIM10A and FXC1/TIM10B.

The protein resides in the mitochondrion inner membrane. Mitochondrial intermembrane chaperone that participates in the import and insertion of multi-pass transmembrane proteins into the mitochondrial inner membrane. May also be required for the transfer of beta-barrel precursors from the TOM complex to the sorting and assembly machinery (SAM complex) of the outer membrane. Acts as a chaperone-like protein that protects the hydrophobic precursors from aggregation and guide them through the mitochondrial intermembrane space. This is Mitochondrial import inner membrane translocase subunit Tim10 (TIMM10) from Bos taurus (Bovine).